Reading from the N-terminus, the 357-residue chain is Membrane-bound lytic murein transglycosylase C (357 aa).

The signal sequence occupies residues 1-15 (MKKYLLLALLPFLYA). The N-palmitoyl cysteine moiety is linked to residue cysteine 16. A lipid anchor (S-diacylglycerol cysteine) is attached at cysteine 16.

Belongs to the transglycosylase Slt family.

It localises to the cell outer membrane. The catalysed reaction is Exolytic cleavage of the (1-&gt;4)-beta-glycosidic linkage between N-acetylmuramic acid (MurNAc) and N-acetylglucosamine (GlcNAc) residues in peptidoglycan, from either the reducing or the non-reducing ends of the peptidoglycan chains, with concomitant formation of a 1,6-anhydrobond in the MurNAc residue.. Its function is as follows. Murein-degrading enzyme. May play a role in recycling of muropeptides during cell elongation and/or cell division. The polypeptide is Membrane-bound lytic murein transglycosylase C (Haemophilus influenzae (strain PittEE)).